Reading from the N-terminus, the 219-residue chain is Trafficking protein particle complex subunit 4 (219 aa).

This sequence belongs to the TRAPP small subunits family. TRAPPC4 subfamily. In terms of assembly, component of the multisubunit TRAPP (transport protein particle) complex, which includes at least TRAPPC2, TRAPPC2L, TRAPPC3, TRAPPC3L, TRAPPC4, TRAPPC5, TRAPPC8, TRAPPC9, TRAPPC10, TRAPPC11 and TRAPPC12. Interacts with SDC2.

It localises to the postsynaptic cell membrane. Its subcellular location is the golgi apparatus membrane. The protein resides in the endoplasmic reticulum. It is found in the vesicle. Functionally, core component of the TRAPP complexes which has a function of guanine nucleotide exchange factor activity for Rab1 GTPase. Plays a role in vesicular transport from endoplasmic reticulum to Golgi and autophagy. May play a role in dendrite postsynaptic membrane trafficking. The protein is Trafficking protein particle complex subunit 4 of Homo sapiens (Human).